Consider the following 435-residue polypeptide: Bystin (435 aa).

The disordered stretch occupies residues 1 to 102 (MPKFKAARGA…VPQDGSDDEE (102 aa)). Arginine 40 carries the post-translational modification Omega-N-methylarginine. A compositionally biased stretch (basic and acidic residues) spans 71–87 (AEHGSGDRPAVPRERTT). Serine 98 is subject to Phosphoserine. Threonine 154 is subject to Phosphothreonine. Phosphoserine is present on residues serine 165 and serine 412.

This sequence belongs to the bystin family. In terms of assembly, binds trophinin, tastin and cytokeratins.

The protein resides in the cytoplasm. It localises to the nucleus. It is found in the nucleolus. In terms of biological role, required for processing of 20S pre-rRNA precursor and biogenesis of 40S ribosomal subunits. This Bos taurus (Bovine) protein is Bystin (BYSL).